The following is a 213-amino-acid chain: Motile sperm domain-containing protein 1 (213 aa).

The region spanning P16–F143 is the MSP domain. 2 consecutive transmembrane segments (helical) span residues S159–G179 and L191–L211. A Nuclear export signal motif is present at residues L205–M208.

Widely expressed. Shows highest expression in ribs, and slightly lower levels of expression in heart, kidney, muscle, thymus, calvariae and lung. Also detected at low levels in spleen and liver.

It localises to the endoplasmic reticulum membrane. Its subcellular location is the golgi apparatus membrane. Its function is as follows. Plays a role in differentiation and/or proliferation of mesenchymal stem cells. Proposed to be involved in epithelial-to-mesenchymal transition (EMT). However, another study suggests that it is not required for EMT or stem cell self-renewal and acts during later stages of differentiation. The chain is Motile sperm domain-containing protein 1 (Mospd1) from Mus musculus (Mouse).